A 560-amino-acid chain; its full sequence is Kinesin light chain 1 (560 aa).

A coiled-coil region spans residues 31 to 99; that stretch reads VIQGLEALKN…MALSNHLNAV (69 aa). The span at 155-176 shows a compositional bias: basic and acidic residues; the sequence is KKYDDDISPSEDKDTDSTKEPL. The interval 155–203 is disordered; that stretch reads KKYDDDISPSEDKDTDSTKEPLDDLFPNDEDDPGQGIQQQHSSAAAAAQ. Ser162 is modified (phosphoserine). The segment covering 192–203 has biased composition (low complexity); that stretch reads QQQHSSAAAAAQ. TPR repeat units follow at residues 213-246, 255-288, 297-330, 339-372, and 381-414; these read LRTL…LEKT, ATML…REKT, AATL…REKV, AKQL…YQTK, and AKTK…AHER. Tyr449 is modified (phosphotyrosine). Ser460 carries the post-translational modification Phosphoserine. One copy of the TPR 6 repeat lies at 464–497; the sequence is TTTLKNLGALYRRQGKFEAAETLEEAAMRSRKQG. Ser521 and Ser524 each carry phosphoserine; by AMPK.

This sequence belongs to the kinesin light chain family. Oligomeric complex composed of two heavy chains and two light chains. Interacts with SPAG9. Interacts with ATCAY; may link mitochondria to KLC1 and regulate mitochondria localization into neuron projections. Interacts (via TPR repeats) with TOR1A; the interaction associates TOR1A with the kinesin oligomeric complex. Interacts with BORCS5. Interacts with MAPK8IP3/JIP3 and NTRK2/TRKB; interaction with NTRK2/TRKB is mediated by MAPK8IP3/JIP3. Interacts with CLSTN1; phosphorylation at Ser-460 inhibits interaction with CLSTN1. Post-translationally, phosphorylation at Ser-460 by ERK inhibits interaction with CLSTN1 and localization to cytoplasmic vesicles.

It is found in the cell projection. It localises to the growth cone. The protein localises to the cytoplasmic vesicle. Its subcellular location is the cytoplasm. The protein resides in the cytoskeleton. Its function is as follows. Kinesin is a microtubule-associated force-producing protein that may play a role in organelle transport. The light chain may function in coupling of cargo to the heavy chain or in the modulation of its ATPase activity. The polypeptide is Kinesin light chain 1 (KLC1) (Pongo abelii (Sumatran orangutan)).